We begin with the raw amino-acid sequence, 547 residues long: Probable terpene synthase 3 (547 aa).

3 residues coordinate Mg(2+): Asp-298, Asp-302, and Glu-451. The DDXXD motif motif lies at 298 to 302 (DDIYD).

The protein belongs to the terpene synthase family. Requires Mg(2+) as cofactor.

Probable sesquiterpene synthase. This chain is Probable terpene synthase 3 (TPS3), found in Ricinus communis (Castor bean).